A 291-amino-acid polypeptide reads, in one-letter code: 4-diphosphocytidyl-2-C-methyl-D-erythritol kinase (291 aa).

K10 is an active-site residue. 94–104 contributes to the ATP binding site; sequence PVSAGLAGGSS. The active site involves D136.

The protein belongs to the GHMP kinase family. IspE subfamily.

It carries out the reaction 4-CDP-2-C-methyl-D-erythritol + ATP = 4-CDP-2-C-methyl-D-erythritol 2-phosphate + ADP + H(+). Its pathway is isoprenoid biosynthesis; isopentenyl diphosphate biosynthesis via DXP pathway; isopentenyl diphosphate from 1-deoxy-D-xylulose 5-phosphate: step 3/6. Catalyzes the phosphorylation of the position 2 hydroxy group of 4-diphosphocytidyl-2C-methyl-D-erythritol. The sequence is that of 4-diphosphocytidyl-2-C-methyl-D-erythritol kinase from Listeria innocua serovar 6a (strain ATCC BAA-680 / CLIP 11262).